We begin with the raw amino-acid sequence, 605 residues long: F-box/WD repeat-containing protein 1A (605 aa).

Positions 128–177 (ASYEKEKELCVKYFEQWSESDQVEFVEHLISQMCHYQHGHINSYLKPMLQ) are homodimerization domain D. The 47-residue stretch at 182 to 228 (TALPARGLDHIAENILSYLDAKSLCAAELVCKEWYRVTSDGMLWKKL) folds into the F-box domain. The interval 190-228 (DHIAENILSYLDAKSLCAAELVCKEWYRVTSDGMLWKKL) is required for down-regulation of SNAI1. WD repeat units lie at residues 301–338 (ETSK…CKRI), 341–378 (GHTG…MLNT), 381–418 (HHCE…DITL), 424–461 (GHRA…FVRT), 464–503 (GHKR…RVLE), 505–541 (HEEL…DPRA), and 553–590 (EHSG…AAHA).

Homodimer. Self-associates. Component of the SCF(BTRC) complex, composed of SKP1, CUL1 and BTRC. Direct interaction with SKP1 with SKP1 occurs via the F-box domain. Interacts with phosphorylated ubiquitination substrates SMAD3 and SMAD4. Interacts with phosphorylated ubiquitination substrates CTNNB1, NFKBIA, NFKBIB, NFKBIE, NFKB1/nuclear factor NF-kappa-B p105 subunit, ATF4, CDC25A, DLG1, FBXO5 and SNAI1; the interaction requires the phosphorylation of the 2 serine residues in the substrate destruction motif D-S-G-X(2,3,4)-S. Binds UBQLN1. Interacts with CDC34 and UBE2R2. Interacts with FBXW11. Interacts with CUL4A and DDB1. Part of a SCF(BTRC)-like complex lacking CUL1, which is associated with phosphorylated NKBIA and RELA; RELA interacts directly with NFKBIA. Interacts with the phosphorylated form of GLI3. Interacts with CLU. Interacts with PER1 (phosphorylated), PER2 (phosphorylated) and PER3. Interacts with phosphorylated ubiquitination substrate CEP68. Interacts with ZC3H12A; this interaction occurs when ZC3H12A is phosphorylated in a IKBKB/IKKB-dependent manner. Interacts with HSF1; this interaction occurs during mitosis and induces HSF1 ubiquitin-dependent degradation, a process inhibited by CDC20. Interacts with NFE2L1. Interacts with INAVA. Interacts with IL10RA; this interaction leads to IL10RA ubiquitination and subsequent degradation. Interacts with REST. Interacts with KLF4; this interaction leads to KLF4 ubiquitination and subsequent degradation. Interacts with UBR2, as part of a SCF(BTRC) complex; the interaction mediates 'Lys-48'-linked ubiquitination of UBR2 and is regulated by DUSP22 in the T-cell receptor signaling pathway. Ubiquitinated via 'Lys-11'-linked polyubiquitin by some cullin-5-RING E3 ubiquitin-protein ligase complex (ECS complex), leading to its degradation. Deubiquitinated by OTUD5, promoting its stability. Expressed in heart, brain, liver, skeletal muscle and, most strongly, in testis.

The protein localises to the cytoplasm. The protein resides in the nucleus. It functions in the pathway protein modification; protein ubiquitination. Substrate recognition component of a SCF (SKP1-CUL1-F-box protein) E3 ubiquitin-protein ligase complex which mediates the ubiquitination and subsequent proteasomal degradation of target proteins. Recognizes and binds to phosphorylated target proteins. SCF(BTRC) mediates the ubiquitination of phosphorylated NFKB, ATF4, CDC25A, DLG1, FBXO5, PER1, SMAD3, SMAD4, SNAI1 and probably NFKB2. SCF(BTRC) mediates the ubiquitination of CTNNB1 and participates in Wnt signaling. SCF(BTRC) mediates the ubiquitination of NFKBIA, NFKBIB and NFKBIE; the degradation frees the associated NFKB1 to translocate into the nucleus and to activate transcription. Ubiquitination of NFKBIA occurs at 'Lys-21' and 'Lys-22'. The SCF(FBXW11) complex also regulates NF-kappa-B by mediating ubiquitination of phosphorylated NFKB1: specifically ubiquitinates the p105 form of NFKB1, leading to its degradation. SCF(BTRC) mediates the ubiquitination of CEP68; this is required for centriole separation during mitosis. SCF(BTRC) mediates the ubiquitination and subsequent degradation of nuclear NFE2L1. Has an essential role in the control of the clock-dependent transcription via degradation of phosphorylated PER1 and PER2. May be involved in ubiquitination and subsequent proteasomal degradation through a DBB1-CUL4 E3 ubiquitin-protein ligase. Required for activation of NFKB-mediated transcription by IL1B, MAP3K14, MAP3K1, IKBKB and TNF. Required for proteolytic processing of GLI3. Mediates ubiquitination of REST, thereby leading to its proteasomal degradation. SCF(BTRC) mediates the ubiquitination and subsequent proteasomal degradation of KLF4; thereby negatively regulating cell pluripotency maintenance and embryogenesis. SCF(BTRC) acts as a regulator of mTORC1 signaling pathway by catalyzing ubiquitination and subsequent proteasomal degradation of phosphorylated DEPTOR, TFE3 and MITF. SCF(BTRC) directs 'Lys-48'-linked ubiquitination of UBR2 in the T-cell receptor signaling pathway. The protein is F-box/WD repeat-containing protein 1A of Mus musculus (Mouse).